Consider the following 177-residue polypeptide: Dual-action ribosomal maturation protein DarP (177 aa).

It belongs to the DarP family.

The protein localises to the cytoplasm. Its function is as follows. Member of a network of 50S ribosomal subunit biogenesis factors which assembles along the 30S-50S interface, preventing incorrect 23S rRNA structures from forming. Promotes peptidyl transferase center (PTC) maturation. This Histophilus somni (strain 2336) (Haemophilus somnus) protein is Dual-action ribosomal maturation protein DarP.